The following is a 481-amino-acid chain: Aspartyl/glutamyl-tRNA(Asn/Gln) amidotransferase subunit B (481 aa).

It belongs to the GatB/GatE family. GatB subfamily. As to quaternary structure, heterotrimer of A, B and C subunits.

The catalysed reaction is L-glutamyl-tRNA(Gln) + L-glutamine + ATP + H2O = L-glutaminyl-tRNA(Gln) + L-glutamate + ADP + phosphate + H(+). The enzyme catalyses L-aspartyl-tRNA(Asn) + L-glutamine + ATP + H2O = L-asparaginyl-tRNA(Asn) + L-glutamate + ADP + phosphate + 2 H(+). Allows the formation of correctly charged Asn-tRNA(Asn) or Gln-tRNA(Gln) through the transamidation of misacylated Asp-tRNA(Asn) or Glu-tRNA(Gln) in organisms which lack either or both of asparaginyl-tRNA or glutaminyl-tRNA synthetases. The reaction takes place in the presence of glutamine and ATP through an activated phospho-Asp-tRNA(Asn) or phospho-Glu-tRNA(Gln). The sequence is that of Aspartyl/glutamyl-tRNA(Asn/Gln) amidotransferase subunit B from Pseudomonas savastanoi pv. phaseolicola (strain 1448A / Race 6) (Pseudomonas syringae pv. phaseolicola (strain 1448A / Race 6)).